The primary structure comprises 563 residues: MAEASQLFKEFKIQSVSEFFRRNAAMLGYTGKIRSLTTVVHEAVTNSLDACEEAGILPYVRVEIEELGREHYKVIVEDNGPGIPEKFITHVFGKMLAGTKAHRNIQSRGQQGIGISGAVMFAQITSGKATRVITSTGGDIIEAWVKIDVDKNEGKIVKKERHPNPKGWRGTRIELEVKNVRYVRSKQGVYWYLKLTAIANPHAHIELIEPDGKLIVFPRSSEEVPKPPVEMKPHPKGVLTDDVYRMAKKTRRNTVRRFLIGEFSRISDKKVDELIKYIAALRLIKTEKDKAVQDQLYERLMNGEVDKVLRSFKGYTKVVKQVAKLMEKPPEKLSWHEAEEIVEAFKYMKFLAPPTHGLRPIGEENIEKGLKGILKPEFVTAVTRPPKVYSGGIPFQVEVGLAYGGEISSGFDLLRYANRVPLLFDAGSCVTTLAARSIDWKRYKVDDLERAPVVLMINVISVHVPYTGTGKQSIANVDEIHNEIRLAIMDAARRLQTYLSGKHRRLYQVKRKKTFEKYVPEIAKALSILTGEPEEEVKNYFLRFIEERFAQSEVEAEEVAENA.

Residues N46, D78, 99 to 100 (TK), 109 to 116 (GQQGIGIS), and K471 each bind ATP.

It belongs to the TOP6B family. Homodimer. Heterotetramer of two Top6A and two Top6B chains.

It carries out the reaction ATP-dependent breakage, passage and rejoining of double-stranded DNA.. Its function is as follows. Relaxes both positive and negative superturns and exhibits a strong decatenase activity. The chain is Type 2 DNA topoisomerase 6 subunit B from Thermococcus onnurineus (strain NA1).